The sequence spans 505 residues: Trans-cinnamate 4-monooxygenase (505 aa).

A helical transmembrane segment spans residues L3 to I23. (E)-cinnamate-binding positions include R213 to Q218 and A306. A heme-binding site is contributed by C447.

This sequence belongs to the cytochrome P450 family. Heme serves as cofactor.

The protein localises to the membrane. The catalysed reaction is (E)-cinnamate + reduced [NADPH--hemoprotein reductase] + O2 = (E)-4-coumarate + oxidized [NADPH--hemoprotein reductase] + H2O + H(+). The protein operates within phenylpropanoid metabolism; trans-4-coumarate biosynthesis; trans-4-coumarate from trans-cinnamate: step 1/1. In terms of biological role, catalyzes the first oxidative step of the phenylpropanoid pathway in higher plants by transforming trans-cinnamate into p-coumarate. The compounds formed by this pathway are essential components for lignification, pollination, and defense against ultraviolet light, predators and pathogens. This is Trans-cinnamate 4-monooxygenase (CYP73A14) from Glycyrrhiza echinata (Licorice).